We begin with the raw amino-acid sequence, 319 residues long: Glucokinase (319 aa).

Position 8–13 (8–13) interacts with ATP; it reads GDIGGT.

The protein belongs to the bacterial glucokinase family.

It is found in the cytoplasm. The enzyme catalyses D-glucose + ATP = D-glucose 6-phosphate + ADP + H(+). The protein is Glucokinase of Chromohalobacter salexigens (strain ATCC BAA-138 / DSM 3043 / CIP 106854 / NCIMB 13768 / 1H11).